The sequence spans 101 residues: Large ribosomal subunit protein eL30 (101 aa).

It belongs to the eukaryotic ribosomal protein eL30 family.

The polypeptide is Large ribosomal subunit protein eL30 (Pyrobaculum calidifontis (strain DSM 21063 / JCM 11548 / VA1)).